Here is a 921-residue protein sequence, read N- to C-terminus: Protein translocase subunit SecA (921 aa).

Residues Q87, 105 to 109 (GEGKT), and D516 contribute to the ATP site. Zn(2+) contacts are provided by C905, C907, C916, and H917.

The protein belongs to the SecA family. In terms of assembly, monomer and homodimer. Part of the essential Sec protein translocation apparatus which comprises SecA, SecYEG and auxiliary proteins SecDF-YajC and YidC. Zn(2+) is required as a cofactor.

It is found in the cell inner membrane. The protein resides in the cytoplasm. The catalysed reaction is ATP + H2O + cellular proteinSide 1 = ADP + phosphate + cellular proteinSide 2.. In terms of biological role, part of the Sec protein translocase complex. Interacts with the SecYEG preprotein conducting channel. Has a central role in coupling the hydrolysis of ATP to the transfer of proteins into and across the cell membrane, serving both as a receptor for the preprotein-SecB complex and as an ATP-driven molecular motor driving the stepwise translocation of polypeptide chains across the membrane. This chain is Protein translocase subunit SecA, found in Albidiferax ferrireducens (strain ATCC BAA-621 / DSM 15236 / T118) (Rhodoferax ferrireducens).